We begin with the raw amino-acid sequence, 2109 residues long: General transcription factor 3C polypeptide 1 (2109 aa).

The disordered stretch occupies residues 467–521 (LPEGEDTFLSESDSEEERSSSKRRGRGSQKDTRASANLRPKTQPHHSTPTKGGWK). Residues 469 to 482 (EGEDTFLSESDSEE) show a composition bias toward acidic residues. Lys-529 is covalently cross-linked (Glycyl lysine isopeptide (Lys-Gly) (interchain with G-Cter in SUMO2)). The segment at 586 to 609 (MENPKESSSSLKTGRHSSGQDKPH) is disordered. The residue at position 667 (Ser-667) is a Phosphoserine. Positions 718 to 727 (STANRVKTSQ) are enriched in polar residues. The disordered stretch occupies residues 718–775 (STANRVKTSQPPVPQGEAEEDSQGKEGPSGSGDSQLSASSRSESGRMKKSDNKMGITP). Phosphoserine is present on Ser-739. The span at 748–759 (SGDSQLSASSRS) shows a compositional bias: low complexity. A compositionally biased stretch (basic and acidic residues) spans 760–769 (ESGRMKKSDN). Glycyl lysine isopeptide (Lys-Gly) (interchain with G-Cter in SUMO2) cross-links involve residues Lys-770 and Lys-833. Disordered regions lie at residues 836–857 (SGRA…SEAP) and 1059–1082 (RKNS…ESAM). Ser-1062 and Ser-1068 each carry phosphoserine. The span at 1073–1082 (SLQKEQESAM) shows a compositional bias: basic and acidic residues. A Glycyl lysine isopeptide (Lys-Gly) (interchain with G-Cter in SUMO2) cross-link involves residue Lys-1142. The disordered stretch occupies residues 1202–1241 (SLDRNRRVRGGKSQKRKRLKKDPGKKIKRKKKGEFPGEKS). Basic residues predominate over residues 1207 to 1221 (RRVRGGKSQKRKRLK). Phosphoserine is present on residues Ser-1253 and Ser-1611. Positions 1608-1631 (KDGSLEDDEDEEDDLDEGVGGKRR) are disordered. A compositionally biased stretch (acidic residues) spans 1612-1624 (LEDDEDEEDDLDE). Residues Ser-1632 and Ser-1653 each carry the phosphoserine modification. Over residues 1823–1833 (EDADIQREDPQ) the composition is skewed to basic and acidic residues. Residues 1823 to 1961 (EDADIQREDP…GSEDPRGFTE (139 aa)) form a disordered region. Residues 1838-1848 (EGSSSEDSPPE) show a composition bias toward low complexity. Phosphoserine occurs at positions 1856, 1865, 1868, 1896, and 1911. Residues 1916–1926 (LEDTAAAGAAQ) are compositionally biased toward low complexity. Over residues 1937-1947 (SPGQEQLSGQA) the composition is skewed to polar residues. Ser-1969 bears the Phosphoserine mark.

Belongs to the TFIIIC subunit 1 family. Part of the TFIIIC subcomplex TFIIIC2, consisting of six subunits, GTF3C1, GTF3C2, GTF3C3, GTF3C4, GTF3C5 and GTF3C6. Interacts with IGHMBP2. Interacts with MAF1.

The protein localises to the nucleus. In terms of biological role, required for RNA polymerase III-mediated transcription. Component of TFIIIC that initiates transcription complex assembly on tRNA and is required for transcription of 5S rRNA and other stable nuclear and cytoplasmic RNAs. Binds to the box B promoter element. This chain is General transcription factor 3C polypeptide 1 (GTF3C1), found in Homo sapiens (Human).